A 208-amino-acid chain; its full sequence is AN1-type zinc finger protein 6 (208 aa).

The A20-type zinc-finger motif lies at 8-42 (SQVPMLCSTGCGFYGNPRTNGMCSVCYKEHLQRQN). Cys-14, Cys-18, Cys-30, and Cys-33 together coordinate Zn(2+). Residues 41–68 (QNSSNGRISPPATSVSSLSESLPVQCTD) are compositionally biased toward polar residues. The disordered stretch occupies residues 41–140 (QNSSNGRISP…PSEEQSKSLE (100 aa)). Ser-49 is modified (phosphoserine). The span at 75 to 94 (QSTLDSTSSSMQPSPVSNQS) shows a compositional bias: low complexity. Polar residues-rich tracts occupy residues 95-110 (LLSE…STSV) and 120-133 (LQAS…QPSE). An AN1-type zinc finger spans residues 143-189 (KQKKNRCFMCRKKVGLTGFECRCGNVYCGVHRYSDVHNCSYNYKADA). Zn(2+) contacts are provided by Cys-149, Cys-152, Cys-163, Cys-165, Cys-170, His-173, His-179, and Cys-181. The residue at position 204 (Lys-204) is an N6-acetyllysine.

In terms of assembly, interacts with PKN1. Interacts with TRAF2. Interacts with mono- and polyubiquitin. Interacts with PEX6. Interacts with PEX5 (Cys-linked ubiquitinated).

Its subcellular location is the cytoplasm. Its function is as follows. Involved in regulation of TNF-alpha induced NF-kappa-B activation and apoptosis. Involved in modulation of 'Lys-48'-linked polyubiquitination status of TRAF2 and decreases association of TRAF2 with RIPK1. Required for PTS1 target sequence-dependent protein import into peroxisomes and PEX5 stability; may cooperate with PEX6. In vitro involved in PEX5 export from the cytosol to peroxisomes. The chain is AN1-type zinc finger protein 6 (ZFAND6) from Pongo abelii (Sumatran orangutan).